A 929-amino-acid chain; its full sequence is Isoleucine--tRNA ligase (929 aa).

The short motif at 58–68 (PYANGDIHIGH) is the 'HIGH' region element. Glutamate 563 contacts L-isoleucyl-5'-AMP. The 'KMSKS' region motif lies at 605 to 609 (KMSKS). Lysine 608 serves as a coordination point for ATP. 4 residues coordinate Zn(2+): cysteine 892, cysteine 895, cysteine 912, and cysteine 915.

This sequence belongs to the class-I aminoacyl-tRNA synthetase family. IleS type 1 subfamily. Monomer. Requires Zn(2+) as cofactor.

Its subcellular location is the cytoplasm. The enzyme catalyses tRNA(Ile) + L-isoleucine + ATP = L-isoleucyl-tRNA(Ile) + AMP + diphosphate. Its function is as follows. Catalyzes the attachment of isoleucine to tRNA(Ile). As IleRS can inadvertently accommodate and process structurally similar amino acids such as valine, to avoid such errors it has two additional distinct tRNA(Ile)-dependent editing activities. One activity is designated as 'pretransfer' editing and involves the hydrolysis of activated Val-AMP. The other activity is designated 'posttransfer' editing and involves deacylation of mischarged Val-tRNA(Ile). This chain is Isoleucine--tRNA ligase, found in Neisseria meningitidis serogroup C (strain 053442).